The following is a 522-amino-acid chain: MAPVAAATGWRLLLVLSAAGLGAAGAPQPPNILLLLMDDMGWGDLGIYGEPSRETPNLDRMAAEGMLFPSFYSANPLCSPSRAALLTGRLPIRNGFYTTNRHARNAYTPQEIVGGIPDQEHVLPELLKEAGYVSKIVGKWHLGHRPQFHPLKHGFDEWFGSPNCHFGPYDNRARPNIPVYRDWEMVGRYYEEFPINLKTGEANLTQVYLQEALDFIKRQQAAQRPFFLYWAIDATHAPVYASRPFLGTSQRGRYGDAVREIDNSVGKILSLLQDLRISENTFVFFTSDNGAALISAPNQGGSNGPFLCGKQTTFEGGMREPAIAWWPGRIPAGRVSHQLGSIMDLFTTSLSLAGLAPPSDRVIDGLDLLPAMLGGQLTDRPIFYYRGDTLMAVTLGQYKAHFWTWTNSWEEFRQGIDFCPGQNVSGVTTHTQEEHTKLPLIFHLGRDPGERFPLSFASTEYLDVLQRVTPVVQQHQKTLVPGQPQLNVCDRAVMNWAPPGCEKLGKCLTPPESTPKKCSWPH.

The N-terminal stretch at 1 to 25 (MAPVAAATGWRLLLVLSAAGLGAAG) is a signal peptide. A catalytic domain region spans residues 27–379 (PQPPNILLLL…PAMLGGQLTD (353 aa)). Positions 38, 39, and 78 each coordinate Ca(2+). Cysteine 78 (nucleophile) is an active-site residue. Cysteine 78 bears the 3-oxoalanine (Cys) mark. Histidine 141 is a catalytic residue. Asparagine 203 carries an N-linked (GlcNAc...) asparagine glycan. Residues aspartate 288 and asparagine 289 each contribute to the Ca(2+) site. Cysteines 308 and 419 form a disulfide. Residue asparagine 423 is glycosylated (N-linked (GlcNAc...) asparagine). Cystine bridges form between cysteine 489-cysteine 518 and cysteine 501-cysteine 507.

Belongs to the sulfatase family. In terms of assembly, homodimer. Ca(2+) is required as a cofactor. In terms of processing, the conversion to 3-oxoalanine (also known as C-formylglycine, FGly), of a serine or cysteine residue in prokaryotes and of a cysteine residue in eukaryotes, is critical for catalytic activity.

It localises to the lysosome. The enzyme catalyses Hydrolysis of the 6-sulfate groups of the N-acetyl-D-galactosamine 6-sulfate units of chondroitin sulfate and of the D-galactose 6-sulfate units of keratan sulfate.. The protein is N-acetylgalactosamine-6-sulfatase (GALNS) of Canis lupus familiaris (Dog).